The primary structure comprises 99 residues: Putative GIY-YIG domain-containing protein 242L (99 aa).

A GIY-YIG domain is found at 5–81; sequence NGWNIYMVTM…KKQTKKVKLQ (77 aa).

The chain is Putative GIY-YIG domain-containing protein 242L from Invertebrate iridescent virus 6 (IIV-6).